The sequence spans 123 residues: Prismalin-14 (123 aa).

The first 16 residues, 1-16 (MRSLLVLLALAACASA), serve as a signal peptide directing secretion.

In terms of tissue distribution, prismatic layer of shell (at protein level). Expressed primarily in the mantle with highest level in the mantle edge and lower level in the mantle pallium.

Its subcellular location is the secreted. Its function is as follows. May be involved in calcification of the prismatic layer of the shell. The sequence is that of Prismalin-14 from Margaritifera margaritifera (Freshwater pearl mussel).